We begin with the raw amino-acid sequence, 234 residues long: Exotoxin type G (234 aa).

The N-terminal stretch at 1–24 is a signal peptide; it reads MKTNILTIIILSCVFSYGSQLAYA.

This sequence belongs to the staphylococcal/streptococcal toxin family.

Mitogenic for human peripheral blood lymphocytes. The sequence is that of Exotoxin type G (speG) from Streptococcus pyogenes serotype M3 (strain ATCC BAA-595 / MGAS315).